The primary structure comprises 170 residues: Small ribosomal subunit protein uS13 (170 aa).

Over residues 128 to 140 (VRHKRGQKVRGQR) the composition is skewed to basic residues. Residues 128 to 170 (VRHKRGQKVRGQRTKSTGRTEGTIGVNVEAIKEEQAEDGGDEE) are disordered.

Belongs to the universal ribosomal protein uS13 family. Part of the 30S ribosomal subunit. Forms a loose heterodimer with protein S19. Forms two bridges to the 50S subunit in the 70S ribosome.

In terms of biological role, located at the top of the head of the 30S subunit, it contacts several helices of the 16S rRNA. In the 70S ribosome it contacts the 23S rRNA (bridge B1a) and protein L5 of the 50S subunit (bridge B1b), connecting the 2 subunits; these bridges are implicated in subunit movement. The protein is Small ribosomal subunit protein uS13 of Natronomonas pharaonis (strain ATCC 35678 / DSM 2160 / CIP 103997 / JCM 8858 / NBRC 14720 / NCIMB 2260 / Gabara) (Halobacterium pharaonis).